Reading from the N-terminus, the 341-residue chain is GTPase Obg (341 aa).

Residues methionine 1–leucine 159 enclose the Obg domain. The tract at residues threonine 128 to arginine 150 is disordered. The segment covering arginine 129–glycine 144 has biased composition (polar residues). The OBG-type G domain occupies alanine 160 to aspartate 334. GTP is bound by residues glycine 166–serine 173, phenylalanine 191–histidine 195, aspartate 213–glycine 216, asparagine 283–aspartate 286, and serine 315–isoleucine 317. Mg(2+) is bound by residues serine 173 and threonine 193.

The protein belongs to the TRAFAC class OBG-HflX-like GTPase superfamily. OBG GTPase family. In terms of assembly, monomer. Mg(2+) serves as cofactor.

Its subcellular location is the cytoplasm. Its function is as follows. An essential GTPase which binds GTP, GDP and possibly (p)ppGpp with moderate affinity, with high nucleotide exchange rates and a fairly low GTP hydrolysis rate. Plays a role in control of the cell cycle, stress response, ribosome biogenesis and in those bacteria that undergo differentiation, in morphogenesis control. This is GTPase Obg from Legionella pneumophila (strain Paris).